A 344-amino-acid chain; its full sequence is Holliday junction branch migration complex subunit RuvB (344 aa).

The large ATPase domain (RuvB-L) stretch occupies residues 1-181; it reads MERIVTPAEM…FGVLCAMEYY (181 aa). ATP-binding positions include L20, R21, G62, K65, T66, T67, 128-130, R171, Y181, and R218; that span reads EDY. T66 contributes to the Mg(2+) binding site. Residues 182–252 form a small ATPAse domain (RuvB-S) region; it reads DENQLKEIVI…EAREALELLE (71 aa). Residues 255–344 form a head domain (RuvB-H) region; the sequence is NQGFDKVDNK…SNKGQTSFFK (90 aa). DNA contacts are provided by R310 and R315.

Belongs to the RuvB family. In terms of assembly, homohexamer. Forms an RuvA(8)-RuvB(12)-Holliday junction (HJ) complex. HJ DNA is sandwiched between 2 RuvA tetramers; dsDNA enters through RuvA and exits via RuvB. An RuvB hexamer assembles on each DNA strand where it exits the tetramer. Each RuvB hexamer is contacted by two RuvA subunits (via domain III) on 2 adjacent RuvB subunits; this complex drives branch migration. In the full resolvosome a probable DNA-RuvA(4)-RuvB(12)-RuvC(2) complex forms which resolves the HJ.

The protein resides in the cytoplasm. The catalysed reaction is ATP + H2O = ADP + phosphate + H(+). Functionally, the RuvA-RuvB-RuvC complex processes Holliday junction (HJ) DNA during genetic recombination and DNA repair, while the RuvA-RuvB complex plays an important role in the rescue of blocked DNA replication forks via replication fork reversal (RFR). RuvA specifically binds to HJ cruciform DNA, conferring on it an open structure. The RuvB hexamer acts as an ATP-dependent pump, pulling dsDNA into and through the RuvAB complex. RuvB forms 2 homohexamers on either side of HJ DNA bound by 1 or 2 RuvA tetramers; 4 subunits per hexamer contact DNA at a time. Coordinated motions by a converter formed by DNA-disengaged RuvB subunits stimulates ATP hydrolysis and nucleotide exchange. Immobilization of the converter enables RuvB to convert the ATP-contained energy into a lever motion, pulling 2 nucleotides of DNA out of the RuvA tetramer per ATP hydrolyzed, thus driving DNA branch migration. The RuvB motors rotate together with the DNA substrate, which together with the progressing nucleotide cycle form the mechanistic basis for DNA recombination by continuous HJ branch migration. Branch migration allows RuvC to scan DNA until it finds its consensus sequence, where it cleaves and resolves cruciform DNA. This chain is Holliday junction branch migration complex subunit RuvB, found in Clostridium botulinum (strain Alaska E43 / Type E3).